A 72-amino-acid polypeptide reads, in one-letter code: MSKVCVLTGKKPKYGNNVSHANNHTRTRFEPNLHTKRIWIEEEKRWVKVRVSAKAMKIMSKTGTAELAKLLK.

The protein belongs to the bacterial ribosomal protein bL28 family.

This Chlorobaculum parvum (strain DSM 263 / NCIMB 8327) (Chlorobium vibrioforme subsp. thiosulfatophilum) protein is Large ribosomal subunit protein bL28.